The sequence spans 321 residues: Viral T-cell receptor beta chain-like T17T-22 (321 aa).

Residues methionine 1–alanine 28 form the signal peptide. Residues aspartate 29–serine 122 are v segment. Asparagine 105 carries an N-linked (GlcNAc...) asparagine; by host glycan. The segment at proline 123 to glutamate 128 is d segment. The interval tyrosine 129–valine 144 is j segment. A c region region spans residues glutamate 145–serine 321. Residues asparagine 214 and asparagine 264 are each glycosylated (N-linked (GlcNAc...) asparagine; by host).

This chain is Viral T-cell receptor beta chain-like T17T-22 (V-TCR), found in Feline leukemia virus.